The sequence spans 226 residues: Cytidylate kinase (226 aa).

10-18 (GPASSGKST) is an ATP binding site.

The protein belongs to the cytidylate kinase family. Type 1 subfamily.

The protein localises to the cytoplasm. It catalyses the reaction CMP + ATP = CDP + ADP. The enzyme catalyses dCMP + ATP = dCDP + ADP. The chain is Cytidylate kinase from Streptococcus thermophilus (strain ATCC BAA-491 / LMD-9).